Consider the following 513-residue polypeptide: Maturase K (513 aa).

This sequence belongs to the intron maturase 2 family. MatK subfamily.

Its subcellular location is the plastid. The protein localises to the chloroplast. Functionally, usually encoded in the trnK tRNA gene intron. Probably assists in splicing its own and other chloroplast group II introns. The polypeptide is Maturase K (Pinus parviflora (Japanese white pine)).